The following is a 514-amino-acid chain: Cytochrome c-552 (514 aa).

Residues Met-1–Ala-21 form the signal peptide. Heme c is bound by residues His-101, Cys-129, Cys-132, Lys-133, Cys-167, Cys-170, His-171, Cys-210, Cys-213, and His-214. Glu-216, Tyr-217, Lys-279, and Gln-281 together coordinate Ca(2+). Tyr-217 serves as a coordination point for substrate. His-282 is a substrate binding site. Heme c is bound by residues His-293, Cys-300, Cys-303, His-304, His-318, Cys-332, Cys-335, His-336, and His-411.

It belongs to the cytochrome c-552 family. Homodimer. Probably also exists as a membrane-associated heterooligomeric complex. Ca(2+) is required as a cofactor. Heme c serves as cofactor.

The protein localises to the periplasm. It carries out the reaction 6 Fe(III)-[cytochrome c] + NH4(+) + 2 H2O = 6 Fe(II)-[cytochrome c] + nitrite + 8 H(+). It functions in the pathway nitrogen metabolism; nitrate reduction (assimilation). Its function is as follows. Catalyzes the reduction of nitrite to ammonia, consuming six electrons in the process. Has very low activity toward hydroxylamine, and even lower activity toward sulfite. Sulfite reductase activity is maximal at neutral pH. In Sulfurospirillum deleyianum, this protein is Cytochrome c-552 (nrfA).